Consider the following 526-residue polypeptide: Peptide chain release factor 3 (526 aa).

The tr-type G domain occupies 9–277 (DKRRTFAIIS…GIVEWAPKPL (269 aa)). GTP is bound by residues 18–25 (SHPDAGKT), 86–90 (DTPGH), and 140–143 (NKLD).

It belongs to the TRAFAC class translation factor GTPase superfamily. Classic translation factor GTPase family. PrfC subfamily.

The protein resides in the cytoplasm. Increases the formation of ribosomal termination complexes and stimulates activities of RF-1 and RF-2. It binds guanine nucleotides and has strong preference for UGA stop codons. It may interact directly with the ribosome. The stimulation of RF-1 and RF-2 is significantly reduced by GTP and GDP, but not by GMP. The polypeptide is Peptide chain release factor 3 (Shewanella putrefaciens (strain CN-32 / ATCC BAA-453)).